The following is a 115-amino-acid chain: Nucleoid-associated protein LBL_0065 (115 aa).

It belongs to the YbaB/EbfC family. Homodimer.

The protein localises to the cytoplasm. It is found in the nucleoid. In terms of biological role, binds to DNA and alters its conformation. May be involved in regulation of gene expression, nucleoid organization and DNA protection. This chain is Nucleoid-associated protein LBL_0065, found in Leptospira borgpetersenii serovar Hardjo-bovis (strain L550).